A 383-amino-acid chain; its full sequence is 8-amino-7-oxononanoate synthase (383 aa).

Residue Arg-21 participates in substrate binding. 108–109 (GY) serves as a coordination point for pyridoxal 5'-phosphate. Substrate is bound at residue His-133. Positions 179, 207, and 233 each coordinate pyridoxal 5'-phosphate. Residue Lys-236 is modified to N6-(pyridoxal phosphate)lysine. Thr-350 is a binding site for substrate.

Belongs to the class-II pyridoxal-phosphate-dependent aminotransferase family. BioF subfamily. In terms of assembly, homodimer. Pyridoxal 5'-phosphate serves as cofactor.

The catalysed reaction is 6-carboxyhexanoyl-[ACP] + L-alanine + H(+) = (8S)-8-amino-7-oxononanoate + holo-[ACP] + CO2. It participates in cofactor biosynthesis; biotin biosynthesis. Catalyzes the decarboxylative condensation of pimeloyl-[acyl-carrier protein] and L-alanine to produce 8-amino-7-oxononanoate (AON), [acyl-carrier protein], and carbon dioxide. This Photorhabdus laumondii subsp. laumondii (strain DSM 15139 / CIP 105565 / TT01) (Photorhabdus luminescens subsp. laumondii) protein is 8-amino-7-oxononanoate synthase.